The following is a 154-amino-acid chain: Interleukin-2 (154 aa).

Positions 1 to 20 are cleaved as a signal peptide; that stretch reads MYKLQLLSCIALTLALVANS. O-linked (GalNAc...) threonine glycosylation is present at threonine 23. A disulfide bridge connects residues cysteine 78 and cysteine 126.

It belongs to the IL-2 family.

It is found in the secreted. Its function is as follows. Cytokine produced by activated CD4-positive helper T-cells and to a lesser extend activated CD8-positive T-cells and natural killer (NK) cells that plays pivotal roles in the immune response and tolerance. Binds to a receptor complex composed of either the high-affinity trimeric IL-2R (IL2RA/CD25, IL2RB/CD122 and IL2RG/CD132) or the low-affinity dimeric IL-2R (IL2RB and IL2RG). Interaction with the receptor leads to oligomerization and conformation changes in the IL-2R subunits resulting in downstream signaling starting with phosphorylation of JAK1 and JAK3. In turn, JAK1 and JAK3 phosphorylate the receptor to form a docking site leading to the phosphorylation of several substrates including STAT5. This process leads to activation of several pathways including STAT, phosphoinositide-3-kinase/PI3K and mitogen-activated protein kinase/MAPK pathways. Functions as a T-cell growth factor and can increase NK-cell cytolytic activity as well. Promotes strong proliferation of activated B-cells and subsequently immunoglobulin production. Plays a pivotal role in regulating the adaptive immune system by controlling the survival and proliferation of regulatory T-cells, which are required for the maintenance of immune tolerance. Moreover, participates in the differentiation and homeostasis of effector T-cell subsets, including Th1, Th2, Th17 as well as memory CD8-positive T-cells. The sequence is that of Interleukin-2 (IL2) from Lama glama (Llama).